The chain runs to 181 residues: Avenin-like a6 (181 aa).

The N-terminal stretch at 1–19 is a signal peptide; it reads MKNLFILALLAFTATSAVA.

Belongs to the prolamin family. Contains 7 disulfide bonds.

Seed storage protein. Not integrated in the gluten polymer through disulfide bonds, unless incorporated by reduction and reoxidation during dough making. Increases dough strength and bread volume, but decreases dough stability when added into a base wheat flour. The protein is Avenin-like a6 of Triticum aestivum (Wheat).